A 74-amino-acid chain; its full sequence is Conotoxin AbVIH (74 aa).

Positions 1–17 (VLIIAVLFLTACQLTTA) are cleaved as a signal peptide. Positions 18–40 (ETSSRGKQKHRALRSTDKDSRMT) are excised as a propeptide. The disordered stretch occupies residues 19–40 (TSSRGKQKHRALRSTDKDSRMT). 3 disulfide bridges follow: Cys43–Cys57, Cys50–Cys61, and Cys56–Cys68.

The protein belongs to the conotoxin O1 superfamily. In terms of tissue distribution, expressed by the venom duct.

It is found in the secreted. The polypeptide is Conotoxin AbVIH (Conus abbreviatus (Abbreviated cone)).